Consider the following 190-residue polypeptide: Protein LZIC (190 aa).

The stretch at 2 to 63 (ASRGKTETSK…SEFNDSLKKI (62 aa)) forms a coiled coil.

It belongs to the CTNNBIP1 family. In terms of assembly, does not interact with CTNNB1.

In Mus musculus (Mouse), this protein is Protein LZIC (Lzic).